We begin with the raw amino-acid sequence, 285 residues long: Ribosomal RNA small subunit methyltransferase A (285 aa).

Residues Asn21, Leu23, Gly48, Glu69, Asp94, and Asn127 each coordinate S-adenosyl-L-methionine.

The protein belongs to the class I-like SAM-binding methyltransferase superfamily. rRNA adenine N(6)-methyltransferase family. RsmA subfamily.

The protein localises to the cytoplasm. The enzyme catalyses adenosine(1518)/adenosine(1519) in 16S rRNA + 4 S-adenosyl-L-methionine = N(6)-dimethyladenosine(1518)/N(6)-dimethyladenosine(1519) in 16S rRNA + 4 S-adenosyl-L-homocysteine + 4 H(+). Specifically dimethylates two adjacent adenosines (A1518 and A1519) in the loop of a conserved hairpin near the 3'-end of 16S rRNA in the 30S particle. May play a critical role in biogenesis of 30S subunits. The chain is Ribosomal RNA small subunit methyltransferase A from Koribacter versatilis (strain Ellin345).